The primary structure comprises 336 residues: Mitochondrial thiamine diphosphate carrier 1 (336 aa).

6 helical membrane-spanning segments follow: residues 11–27 (RRAL…GGIS), 88–105 (VPAL…FTVL), 127–150 (YLSY…FDLL), 182–199 (LYSG…YAGL), 230–246 (SVSS…AGTF), and 303–322 (GLFP…FVVY). Solcar repeat units lie at residues 11-111 (RRAL…LKTF), 124-210 (LSPY…FKRS), and 231-328 (VSSF…ISDW).

This sequence belongs to the mitochondrial carrier (TC 2.A.29) family. Ubiquitous with highest expression in pollen.

It is found in the mitochondrion inner membrane. Its function is as follows. Mitochondrial transporter that mediates uptake of thiamine diphosphate (ThDP) into mitochondria. The sequence is that of Mitochondrial thiamine diphosphate carrier 1 from Zea mays (Maize).